Consider the following 279-residue polypeptide: uncharacterized protein (279 aa).

This is an uncharacterized protein from Borreliella burgdorferi (strain ATCC 35210 / DSM 4680 / CIP 102532 / B31) (Borrelia burgdorferi).